The following is a 140-amino-acid chain: Nucleoside diphosphate kinase (140 aa).

Lys-11, Phe-59, Arg-87, Thr-93, Arg-104, and Asn-114 together coordinate ATP. The Pros-phosphohistidine intermediate role is filled by His-117.

The protein belongs to the NDK family. Homotetramer. Requires Mg(2+) as cofactor.

The protein localises to the cytoplasm. The enzyme catalyses a 2'-deoxyribonucleoside 5'-diphosphate + ATP = a 2'-deoxyribonucleoside 5'-triphosphate + ADP. It carries out the reaction a ribonucleoside 5'-diphosphate + ATP = a ribonucleoside 5'-triphosphate + ADP. In terms of biological role, major role in the synthesis of nucleoside triphosphates other than ATP. The ATP gamma phosphate is transferred to the NDP beta phosphate via a ping-pong mechanism, using a phosphorylated active-site intermediate. The chain is Nucleoside diphosphate kinase from Bradyrhizobium diazoefficiens (strain JCM 10833 / BCRC 13528 / IAM 13628 / NBRC 14792 / USDA 110).